We begin with the raw amino-acid sequence, 229 residues long: 2,3-bisphosphoglycerate-dependent phosphoglycerate mutase 2 (229 aa).

Substrate contacts are provided by residues Arg8 to Asn15, Thr21 to Gly22, Arg60, Glu87 to Tyr90, Lys98, Arg114 to Arg115, and Gly183 to Asn184. The active-site Tele-phosphohistidine intermediate is the His9. The Proton donor/acceptor role is filled by Glu87.

It belongs to the phosphoglycerate mutase family. BPG-dependent PGAM subfamily.

It carries out the reaction (2R)-2-phosphoglycerate = (2R)-3-phosphoglycerate. The protein operates within carbohydrate degradation; glycolysis; pyruvate from D-glyceraldehyde 3-phosphate: step 3/5. In terms of biological role, catalyzes the interconversion of 2-phosphoglycerate and 3-phosphoglycerate. In Latilactobacillus sakei subsp. sakei (strain 23K) (Lactobacillus sakei subsp. sakei), this protein is 2,3-bisphosphoglycerate-dependent phosphoglycerate mutase 2.